We begin with the raw amino-acid sequence, 253 residues long: Ubiquinone/menaquinone biosynthesis C-methyltransferase UbiE (253 aa).

Residues T76, D97, and 125-126 (NA) contribute to the S-adenosyl-L-methionine site.

It belongs to the class I-like SAM-binding methyltransferase superfamily. MenG/UbiE family.

The enzyme catalyses a 2-demethylmenaquinol + S-adenosyl-L-methionine = a menaquinol + S-adenosyl-L-homocysteine + H(+). The catalysed reaction is a 2-methoxy-6-(all-trans-polyprenyl)benzene-1,4-diol + S-adenosyl-L-methionine = a 5-methoxy-2-methyl-3-(all-trans-polyprenyl)benzene-1,4-diol + S-adenosyl-L-homocysteine + H(+). Its pathway is quinol/quinone metabolism; menaquinone biosynthesis; menaquinol from 1,4-dihydroxy-2-naphthoate: step 2/2. It participates in cofactor biosynthesis; ubiquinone biosynthesis. Its function is as follows. Methyltransferase required for the conversion of demethylmenaquinol (DMKH2) to menaquinol (MKH2) and the conversion of 2-polyprenyl-6-methoxy-1,4-benzoquinol (DDMQH2) to 2-polyprenyl-3-methyl-6-methoxy-1,4-benzoquinol (DMQH2). This is Ubiquinone/menaquinone biosynthesis C-methyltransferase UbiE from Rhodopseudomonas palustris (strain ATCC BAA-98 / CGA009).